Here is a 235-residue protein sequence, read N- to C-terminus: Ribosomal RNA large subunit methyltransferase E (235 aa).

S-adenosyl-L-methionine-binding residues include G76, W78, D99, D115, and D139. The active-site Proton acceptor is K179.

The protein belongs to the class I-like SAM-binding methyltransferase superfamily. RNA methyltransferase RlmE family.

It is found in the cytoplasm. It carries out the reaction uridine(2552) in 23S rRNA + S-adenosyl-L-methionine = 2'-O-methyluridine(2552) in 23S rRNA + S-adenosyl-L-homocysteine + H(+). In terms of biological role, specifically methylates the uridine in position 2552 of 23S rRNA at the 2'-O position of the ribose in the fully assembled 50S ribosomal subunit. The protein is Ribosomal RNA large subunit methyltransferase E of Rhodopseudomonas palustris (strain BisA53).